The following is a 347-amino-acid chain: DNA primase small subunit PriS (347 aa).

Active-site residues include D95 and D97. The Zn(2+) site is built by C106, H108, C114, and C117. The short motif at 106–117 (CNHEPGTVCPIC) is the Zinc knuckle motif element. D280 is a catalytic residue.

Belongs to the eukaryotic-type primase small subunit family. Heterodimer of a small subunit (PriS) and a large subunit (PriL). Both participate in formation of the active center, but the ATP-binding site is exclusively located on the small subunit. The cofactor is Mg(2+). It depends on Mn(2+) as a cofactor.

Catalytic subunit of DNA primase, an RNA polymerase that catalyzes the synthesis of short RNA molecules used as primers for DNA polymerase during DNA replication. The small subunit contains the primase catalytic core and has DNA synthesis activity on its own. Binding to the large subunit stabilizes and modulates the activity, increasing the rate of DNA synthesis while decreasing the length of the DNA fragments, and conferring RNA synthesis capability. The DNA polymerase activity may enable DNA primase to also catalyze primer extension after primer synthesis. May also play a role in DNA repair. This Pyrococcus furiosus (strain ATCC 43587 / DSM 3638 / JCM 8422 / Vc1) protein is DNA primase small subunit PriS.